The primary structure comprises 187 residues: CRISPR system Cmr subunit Cmr1-2 (187 aa).

It belongs to the CRISPR system Cmr1 family. Part of the type III-B Cmr ribonucleoprotein (RNP) complex. This is an elongated RNP with Cmr2 and Cmr3 as the base, with Cmr4 and Cmr5 forming a helical core along the mature crRNA (39 or 45 nt in length), while the complex is capped by Cmr6 and Cmr1. The 5' end of the crRNA is bound to Cmr2 and Cmr3, while Cmr6 and a Cmr1 subunit (Cmr1-1 or Cmr1-2) cap the 3' end of the crRNA. The target RNA lies antiparallel to the crRNA, with its 5' end near Cmr1 and Cmr6 and its 3' end near Cmr2 and Cmr3; major target cleavage occurs nears the junction of Cmr1/Cmr6 and Cmr4/Cmr, with minor cleavage occurring at 6 nt intervals which coincide with the proposed spacing of Cmr4 subunits.

It is found in the cytoplasm. In terms of biological role, CRISPR (clustered regularly interspaced short palindromic repeat), is an adaptive immune system that provides protection against mobile genetic elements (viruses, transposable elements and conjugative plasmids). CRISPR clusters contain sequences complementary to antecedent mobile elements and target invading nucleic acids. CRISPR clusters are transcribed and processed into CRISPR RNA (crRNA), formerly called psiRNA (prokaryotic silencing) in this organism. Part of the Cmr ribonucleoprotein complex which has divalent cation-dependent endoribonuclease activity specific for ssRNA complementary to the crRNA (target RNA), generating 5' hydroxy- and 3' phosphate or 2'-3' cyclic phosphate termini. Cmr4 is probably the subunit that cleaves target RNA. Cmr complex does not cleave ssDNA complementary to the crRNA. Cleavage of invading RNA is guided by the crRNA; substrate cleavage occurs a fixed distance (14 nt) from the 3' end of the crRNA. In vitro reconstitution shows Cmr1-2 and Cmr5 are not absolutely necessary for target cleavage. In Pyrococcus furiosus (strain ATCC 43587 / DSM 3638 / JCM 8422 / Vc1), this protein is CRISPR system Cmr subunit Cmr1-2.